The primary structure comprises 442 residues: MREIVHIQAGQCGNQIGSKFWEVISDEQGVDPPDIPGDSDLQLERINVYYNEATGGRYVPAILMDLEPGTMDSVRAGPYGQIFRPDNFVFGQTGAGNNWAKGHYTEGPELIDSVLDVVRKEAESCDCLQGFQIAHSLGGGTGSGMGTLLISKIREEYPDRMMMTFSVIPSPKVSDTVVEPYNTTLSVHQLVENADEVMCIGNEALYDICLPTLKLTTPTFGHETLVSAVMSGVTCCLRFPGQLNSDLRKLAVNLIPFPRLHFFLVGFAPLTSRGSQQYRALTVPELTQQMFDAKNMMAASDPAHGRYLTASAMFRGRMSTKEVDEQMLNVQNKNSSYFVEWIPNNIKSSVCDIPPKGLKMSATFIGNNTAIQEMFKRVSEQFTAMFRRKAFLHWYTGEGMDEMEFTEAESNMNDLVSEYQQYQDATVEEEGEFDEEEDVEQY.

The GTP site is built by Q11, E67, S136, G140, T141, G142, and N202. E67 contributes to the Mg(2+) binding site.

This sequence belongs to the tubulin family. As to quaternary structure, dimer of alpha and beta chains. A typical microtubule is a hollow water-filled tube with an outer diameter of 25 nm and an inner diameter of 15 nM. Alpha-beta heterodimers associate head-to-tail to form protofilaments running lengthwise along the microtubule wall with the beta-tubulin subunit facing the microtubule plus end conferring a structural polarity. Microtubules usually have 13 protofilaments but different protofilament numbers can be found in some organisms and specialized cells. Requires Mg(2+) as cofactor.

The protein localises to the cytoplasm. The protein resides in the cytoskeleton. In terms of biological role, tubulin is the major constituent of microtubules, a cylinder consisting of laterally associated linear protofilaments composed of alpha- and beta-tubulin heterodimers. Microtubules grow by the addition of GTP-tubulin dimers to the microtubule end, where a stabilizing cap forms. Below the cap, tubulin dimers are in GDP-bound state, owing to GTPase activity of alpha-tubulin. The sequence is that of Tubulin beta chain (TUBB) from Euglena gracilis.